The chain runs to 172 residues: Orotate phosphoribosyltransferase (172 aa).

5-phospho-alpha-D-ribose 1-diphosphate is bound by residues Arg88, Lys89, Lys92, His94, and 113–121; that span reads EDVTTSGGS. Orotate is bound by residues Thr117 and Arg145.

This sequence belongs to the purine/pyrimidine phosphoribosyltransferase family. PyrE subfamily. As to quaternary structure, homodimer. Mg(2+) serves as cofactor.

The enzyme catalyses orotidine 5'-phosphate + diphosphate = orotate + 5-phospho-alpha-D-ribose 1-diphosphate. The protein operates within pyrimidine metabolism; UMP biosynthesis via de novo pathway; UMP from orotate: step 1/2. Catalyzes the transfer of a ribosyl phosphate group from 5-phosphoribose 1-diphosphate to orotate, leading to the formation of orotidine monophosphate (OMP). The polypeptide is Orotate phosphoribosyltransferase (Methanospirillum hungatei JF-1 (strain ATCC 27890 / DSM 864 / NBRC 100397 / JF-1)).